The sequence spans 222 residues: Bone marrow proteoglycan (222 aa).

An N-terminal signal peptide occupies residues 1 to 16; that stretch reads MKLPLLLALLFGAVSA. A propeptide spans 17-105 (acidic); sequence LHLRSETSTF…VKVVGIPGCQ (89 aa). Threonine 23 carries an O-linked (GalNAc...) threonine; partial glycan. O-linked (GalNAc...) serine glycosylation occurs at serine 24. Threonine 25 carries an O-linked (GalNAc...) threonine glycan. The tract at residues 25 to 75 is disordered; sequence TFETPLGAKTLPEDEETPEQEMEETPCRELEEEEEWGSGSEDASKKDGAVE. Threonine 34 carries an O-linked (GalNAc...) threonine; partial glycan. The segment covering 37–60 has biased composition (acidic residues); sequence EDEETPEQEMEETPCRELEEEEEW. O-linked (Xyl...) (chondroitin sulfate) serine glycosylation occurs at serine 62. Residue asparagine 86 is glycosylated (N-linked (GlcNAc...) asparagine). The region spanning 104–222 is the C-type lectin domain; the sequence is CQTCRYLLVR…LRRLPFICSY (119 aa). 2 disulfides stabilise this stretch: cysteine 125–cysteine 220 and cysteine 197–cysteine 212.

As to quaternary structure, in pregnancy serum, the proform exists as a disulfide-linked 2:2 heterotetramer with PAPPA, as a disulfide-linked 2:2 heterotetramer with AGT, and as a complex (probably a 2:2:2 heterohexamer) with AGT and C3dg. Nitrated. In terms of tissue distribution, detected in plasma and urine (at protein level). Detected in placenta (at protein level). High levels of the proform in placenta and pregnancy serum; in placenta, localized to X cells of septa and anchoring villi. Lower levels in a variety of other tissues including kidney, myometrium, endometrium, ovaries, breast, prostate, bone marrow and colon.

It localises to the secreted. It is found in the cytoplasmic vesicle. The protein localises to the secretory vesicle. Functionally, cytotoxin and helminthotoxin. Also induces non-cytolytic histamine release from human basophils. Involved in antiparasitic defense mechanisms and immune hypersensitivity reactions. The proform acts as a proteinase inhibitor, reducing the activity of PAPPA. In Homo sapiens (Human), this protein is Bone marrow proteoglycan (PRG2).